Reading from the N-terminus, the 154-residue chain is Myoglobin (154 aa).

In terms of domain architecture, Globin spans 2–148 (GLSDGEWQLV…FRKDMASNYK (147 aa)). Residue S4 is modified to Phosphoserine. H65 contributes to the nitrite binding site. H65 contacts O2. Phosphothreonine is present on T68. H94 lines the heme b pocket.

It belongs to the globin family. Monomeric.

It localises to the cytoplasm. The protein resides in the sarcoplasm. It carries out the reaction Fe(III)-heme b-[protein] + nitric oxide + H2O = Fe(II)-heme b-[protein] + nitrite + 2 H(+). The enzyme catalyses H2O2 + AH2 = A + 2 H2O. Monomeric heme protein which primary function is to store oxygen and facilitate its diffusion within muscle tissues. Reversibly binds oxygen through a pentacoordinated heme iron and enables its timely and efficient release as needed during periods of heightened demand. Depending on the oxidative conditions of tissues and cells, and in addition to its ability to bind oxygen, it also has a nitrite reductase activity whereby it regulates the production of bioactive nitric oxide. Under stress conditions, like hypoxia and anoxia, it also protects cells against reactive oxygen species thanks to its pseudoperoxidase activity. The chain is Myoglobin (MB) from Pan troglodytes (Chimpanzee).